Consider the following 428-residue polypeptide: Enolase (428 aa).

A (2R)-2-phosphoglycerate-binding site is contributed by Gln-163. Glu-205 serves as the catalytic Proton donor. Residues Asp-242, Glu-286, and Asp-313 each contribute to the Mg(2+) site. Residues Lys-338, Arg-367, Ser-368, and Lys-389 each contribute to the (2R)-2-phosphoglycerate site. Lys-338 acts as the Proton acceptor in catalysis.

The protein belongs to the enolase family. The cofactor is Mg(2+).

The protein resides in the cytoplasm. It localises to the secreted. Its subcellular location is the cell surface. It carries out the reaction (2R)-2-phosphoglycerate = phosphoenolpyruvate + H2O. It functions in the pathway carbohydrate degradation; glycolysis; pyruvate from D-glyceraldehyde 3-phosphate: step 4/5. Its function is as follows. Catalyzes the reversible conversion of 2-phosphoglycerate (2-PG) into phosphoenolpyruvate (PEP). It is essential for the degradation of carbohydrates via glycolysis. The polypeptide is Enolase (Verminephrobacter eiseniae (strain EF01-2)).